The following is a 207-amino-acid chain: Superoxide dismutase [Mn] (207 aa).

H28, H76, D160, and H164 together coordinate Mn(2+).

The protein belongs to the iron/manganese superoxide dismutase family. It depends on Mn(2+) as a cofactor.

It catalyses the reaction 2 superoxide + 2 H(+) = H2O2 + O2. Its function is as follows. Destroys superoxide anion radicals which are normally produced within the cells and which are toxic to biological systems. In Mycobacterium leprae (strain TN), this protein is Superoxide dismutase [Mn] (sodA).